We begin with the raw amino-acid sequence, 372 residues long: Lysophosphatidic acid receptor 5 (372 aa).

The Extracellular segment spans residues 1 to 26; that stretch reads MLANSSSTNSSVLPCPDYRPTHRLHL. N-linked (GlcNAc...) asparagine glycosylation is found at Asn4 and Asn9. Residues 27-47 traverse the membrane as a helical segment; that stretch reads VVYSLVLAAGLPLNALALWVF. Residues 48 to 55 lie on the Cytoplasmic side of the membrane; sequence LRALRVHS. A helical membrane pass occupies residues 56–76; the sequence is VVSVYMCNLAASDLLFTLSLP. At 77–96 the chain is on the extracellular side; that stretch reads VRLSYYALHHWPFPDLLCQT. An intrachain disulfide couples Cys94 to Cys175. The chain crosses the membrane as a helical span at residues 97–117; the sequence is TGAIFQMNMYGSCIFLMLINV. Residues 118 to 136 lie on the Cytoplasmic side of the membrane; the sequence is DRYAAIVHPLRLRHLRRPR. Residues 137-157 traverse the membrane as a helical segment; it reads VARLLCLGVWALILVFAVPAA. Residues 158–187 are Extracellular-facing; sequence RVHRPSRCRYRDLEVRLCFESFSDELWKGR. A helical transmembrane segment spans residues 188–208; the sequence is LLPLVLLAEALGFLLPLAAVV. Residues 209 to 239 are Cytoplasmic-facing; it reads YSSGRVFWTLARPDATQSQRRRKTVRLLLAN. A helical transmembrane segment spans residues 240-260; the sequence is LVIFLLCFVPYNSTLAVYGLL. At 261-276 the chain is on the extracellular side; that stretch reads RSKLVAASVPARDRVR. The helical transmembrane segment at 277–297 threads the bilayer; the sequence is GVLMVMVLLAGANCVLDPLVY. At 298–372 the chain is on the cytoplasmic side; sequence YFSAEGFRNT…FTQCPQDSAL (75 aa). Residues 312 to 372 are disordered; the sequence is GTPHRARTSA…FTQCPQDSAL (61 aa). 2 stretches are compositionally biased toward polar residues: residues 332–341 and 357–372; these read SERSAVTTDA and SHSL…DSAL.

The protein belongs to the G-protein coupled receptor 1 family. In terms of tissue distribution, not expressed in frontal cortex, basal forebrain, caudate putamen, thalamus, or hippocampus.

It is found in the cell membrane. Receptor for lysophosphatidic acid (LPA), a mediator of diverse cellular activities. This Homo sapiens (Human) protein is Lysophosphatidic acid receptor 5 (LPAR5).